Reading from the N-terminus, the 317-residue chain is GPI-specific phospholipase A2-like PGAP3 (317 aa).

The signal sequence occupies residues 1–18 (MAPFLVLFLAGVVSASRG). Residues 19 to 93 (DREPVYRDCV…QFHGKWPFSR (75 aa)) are Lumenal-facing. A glycan (N-linked (GlcNAc...) asparagine) is linked at N35. Residues 94–114 (FLFFQEPASALASFLNGVASL) form a helical membrane-spanning segment. Topologically, residues 115–132 (LMLFRYRSSVPSSCQMYR) are cytoplasmic. The chain crosses the membrane as a helical span at residues 133 to 153 (TCLAFSMVSVNAWFWSTIFHT). At 154-163 (RDTALTEKMD) the chain is on the lumenal side. A helical transmembrane segment spans residues 164 to 180 (YFCASSVILHSIYLCCM). At 181 to 189 (RTFGLQYPS) the chain is on the cytoplasmic side. The chain crosses the membrane as a helical span at residues 190–210 (IANAFGAFLVLLFACHISYLT). Topologically, residues 211–219 (LGRFDYSYN) are lumenal. Residues 220 to 240 (MAANTSFGIVNLMWWLAWCMW) traverse the membrane as a helical segment. The Cytoplasmic portion of the chain corresponds to 241–251 (RRFHQPYLWKC). The helical transmembrane segment at 252–272 (VLVVVLLQSLALLELLDFPPV) threads the bilayer. A topological domain (lumenal) is located at residue M273. Residues 274-293 (WILDAHALWHFSTIPLHFLF) form a helical membrane-spanning segment. Over 294-317 (YSFLRDDSLYLLKVNHDDDIPKLD) the chain is Cytoplasmic.

Belongs to the PGAP3 family.

The protein resides in the golgi apparatus membrane. Functionally, involved in the fatty acid remodeling steps of GPI-anchor maturation where the unsaturated acyl chain at sn-2 of inositol phosphate is replaced by a saturated stearoyl chain. May catalyze the first step of the fatty acid remodeling, by removing the unsaturated acyl chain at sn-2 of inositol phosphate, generating a lyso-GPI intermediate. The fatty acid remodeling steps is critical for the integration of GPI-APs into lipid rafts. The polypeptide is GPI-specific phospholipase A2-like PGAP3 (Xenopus laevis (African clawed frog)).